Consider the following 313-residue polypeptide: Protein EMSY-LIKE 2 (313 aa).

The 88-residue stretch at 1–88 folds into the ENT domain; sequence MEAQIHILEQ…HQSLDVHPSP (88 aa). A coiled-coil region spans residues 35–58; sequence MTNLRKELRISDDENRQLLNNVHN. Disordered regions lie at residues 84 to 106 and 195 to 229; these read VHPS…YPSI and LNVG…REHL. Basic residues predominate over residues 206 to 219; sequence GNRRTLSHGGRGRG. Positions 267–293 form a coiled coil; sequence HELDKAKKLLKEHEQALIAAIARLTDA. Ser-294 bears the Phosphoserine mark. Residues 294 to 313 form a disordered region; the sequence is SDYESDGEEPYSHELPMLLG.

In terms of assembly, interacts with EDM2 in nucleus.

Its subcellular location is the nucleus. In terms of biological role, probably involved in the regulation of chromatin states. Contributes to RPP7-mediated and basal immunity, especially against Hyaloperonospora arabidopsidis isolate Hiks1. Regulates negatively EDM2-dependent floral transition. In Arabidopsis thaliana (Mouse-ear cress), this protein is Protein EMSY-LIKE 2.